The primary structure comprises 294 residues: Protoheme IX farnesyltransferase (294 aa).

9 helical membrane passes run 13 to 33, 35 to 55, 84 to 104, 107 to 127, 132 to 152, 162 to 182, 208 to 228, 229 to 249, and 264 to 284; these read IIFG…KGVI, YPLF…GCVF, ISLI…YAAA, LAMQ…SLYM, VYGT…GYCA, LILL…IAIF, IILY…SGYA, GYKY…MALS, and FIFS…DPHV.

The protein belongs to the UbiA prenyltransferase family. Protoheme IX farnesyltransferase subfamily.

It is found in the cell inner membrane. The enzyme catalyses heme b + (2E,6E)-farnesyl diphosphate + H2O = Fe(II)-heme o + diphosphate. It functions in the pathway porphyrin-containing compound metabolism; heme O biosynthesis; heme O from protoheme: step 1/1. Its function is as follows. Converts heme B (protoheme IX) to heme O by substitution of the vinyl group on carbon 2 of heme B porphyrin ring with a hydroxyethyl farnesyl side group. This chain is Protoheme IX farnesyltransferase, found in Photorhabdus laumondii subsp. laumondii (strain DSM 15139 / CIP 105565 / TT01) (Photorhabdus luminescens subsp. laumondii).